The primary structure comprises 488 residues: Probable glycine dehydrogenase (decarboxylating) subunit 2 (488 aa).

An N6-(pyridoxal phosphate)lysine modification is found at Lys274.

Belongs to the GcvP family. C-terminal subunit subfamily. As to quaternary structure, the glycine cleavage system is composed of four proteins: P, T, L and H. In this organism, the P 'protein' is a heterodimer of two subunits. It depends on pyridoxal 5'-phosphate as a cofactor.

The enzyme catalyses N(6)-[(R)-lipoyl]-L-lysyl-[glycine-cleavage complex H protein] + glycine + H(+) = N(6)-[(R)-S(8)-aminomethyldihydrolipoyl]-L-lysyl-[glycine-cleavage complex H protein] + CO2. In terms of biological role, the glycine cleavage system catalyzes the degradation of glycine. The P protein binds the alpha-amino group of glycine through its pyridoxal phosphate cofactor; CO(2) is released and the remaining methylamine moiety is then transferred to the lipoamide cofactor of the H protein. This Listeria monocytogenes serovar 1/2a (strain ATCC BAA-679 / EGD-e) protein is Probable glycine dehydrogenase (decarboxylating) subunit 2.